The primary structure comprises 138 residues: Large-conductance mechanosensitive channel (138 aa).

Helical transmembrane passes span 15–35 (VDLA…NSIV), 38–58 (IIMP…MFIQ), and 80–100 (GNFI…FLVV).

This sequence belongs to the MscL family. As to quaternary structure, homopentamer.

Its subcellular location is the cell inner membrane. Channel that opens in response to stretch forces in the membrane lipid bilayer. May participate in the regulation of osmotic pressure changes within the cell. In Brucella ovis (strain ATCC 25840 / 63/290 / NCTC 10512), this protein is Large-conductance mechanosensitive channel.